Here is a 347-residue protein sequence, read N- to C-terminus: Phenylalanine--tRNA ligase alpha subunit (347 aa).

Position 265 (Glu-265) interacts with Mg(2+).

It belongs to the class-II aminoacyl-tRNA synthetase family. Phe-tRNA synthetase alpha subunit type 1 subfamily. In terms of assembly, tetramer of two alpha and two beta subunits. Mg(2+) serves as cofactor.

It localises to the cytoplasm. The enzyme catalyses tRNA(Phe) + L-phenylalanine + ATP = L-phenylalanyl-tRNA(Phe) + AMP + diphosphate + H(+). In Wolbachia sp. subsp. Drosophila simulans (strain wRi), this protein is Phenylalanine--tRNA ligase alpha subunit.